Here is a 684-residue protein sequence, read N- to C-terminus: Sorbicillinoid biosynthetic cluster transcription factor 2 (684 aa).

A disordered region spans residues 114 to 151 (ISSAPSLETPPESVAASPPTVDSIPVSHHVNEDPEAEP).

Its subcellular location is the nucleus. Its function is as follows. Transcription factor that acts in concert with sorR1 which is a transcriptional activator of the gene cluster that mediates the biosynthesis of sorbicillinoids, a diverse group of yellow secondary metabolites that restrict growth of competing pathogenic fungi but not of bacteria. This is Sorbicillinoid biosynthetic cluster transcription factor 2 from Penicillium rubens (strain ATCC 28089 / DSM 1075 / NRRL 1951 / Wisconsin 54-1255) (Penicillium chrysogenum).